The chain runs to 487 residues: Protein nucleotidyltransferase YdiU (487 aa).

ATP contacts are provided by glycine 90, glycine 92, arginine 93, lysine 113, aspartate 125, glycine 126, arginine 176, and arginine 183. Aspartate 252 functions as the Proton acceptor in the catalytic mechanism. Residues asparagine 253 and aspartate 262 each contribute to the Mg(2+) site. Position 262 (aspartate 262) interacts with ATP.

Belongs to the SELO family. Requires Mg(2+) as cofactor. It depends on Mn(2+) as a cofactor.

It catalyses the reaction L-seryl-[protein] + ATP = 3-O-(5'-adenylyl)-L-seryl-[protein] + diphosphate. The enzyme catalyses L-threonyl-[protein] + ATP = 3-O-(5'-adenylyl)-L-threonyl-[protein] + diphosphate. It carries out the reaction L-tyrosyl-[protein] + ATP = O-(5'-adenylyl)-L-tyrosyl-[protein] + diphosphate. The catalysed reaction is L-histidyl-[protein] + UTP = N(tele)-(5'-uridylyl)-L-histidyl-[protein] + diphosphate. It catalyses the reaction L-seryl-[protein] + UTP = O-(5'-uridylyl)-L-seryl-[protein] + diphosphate. The enzyme catalyses L-tyrosyl-[protein] + UTP = O-(5'-uridylyl)-L-tyrosyl-[protein] + diphosphate. Its function is as follows. Nucleotidyltransferase involved in the post-translational modification of proteins. It can catalyze the addition of adenosine monophosphate (AMP) or uridine monophosphate (UMP) to a protein, resulting in modifications known as AMPylation and UMPylation. The polypeptide is Protein nucleotidyltransferase YdiU (Pseudomonas fluorescens (strain Pf0-1)).